The chain runs to 39 residues: Photosystem II reaction center protein J (39 aa).

The helical transmembrane segment at 7 to 27 threads the bilayer; that stretch reads IPLWIVAVVAGLGVITVVGLF.

The protein belongs to the PsbJ family. As to quaternary structure, PSII is composed of 1 copy each of membrane proteins PsbA, PsbB, PsbC, PsbD, PsbE, PsbF, PsbH, PsbI, PsbJ, PsbK, PsbL, PsbM, PsbT, PsbX, PsbY, PsbZ, Psb30/Ycf12, peripheral proteins PsbO, CyanoQ (PsbQ), PsbU, PsbV and a large number of cofactors. It forms dimeric complexes.

It is found in the cellular thylakoid membrane. In terms of biological role, one of the components of the core complex of photosystem II (PSII). PSII is a light-driven water:plastoquinone oxidoreductase that uses light energy to abstract electrons from H(2)O, generating O(2) and a proton gradient subsequently used for ATP formation. It consists of a core antenna complex that captures photons, and an electron transfer chain that converts photonic excitation into a charge separation. The protein is Photosystem II reaction center protein J of Synechococcus sp. (strain JA-2-3B'a(2-13)) (Cyanobacteria bacterium Yellowstone B-Prime).